Here is a 368-residue protein sequence, read N- to C-terminus: D-alanine--D-alanine ligase (368 aa).

The region spanning 141–350 (KMIWDYSGLP…YNELIMHLIE (210 aa)) is the ATP-grasp domain. 176–231 (EKDLEYPLFIKPCRAGSSVGAGMVKNRNELLEQAEESFLWDNKILVEACIEAREVE) contacts ATP. Residues D303, E317, and N319 each coordinate Mg(2+).

The protein belongs to the D-alanine--D-alanine ligase family. Mg(2+) is required as a cofactor. Mn(2+) serves as cofactor.

It localises to the cytoplasm. It catalyses the reaction 2 D-alanine + ATP = D-alanyl-D-alanine + ADP + phosphate + H(+). It participates in cell wall biogenesis; peptidoglycan biosynthesis. Cell wall formation. The protein is D-alanine--D-alanine ligase of Treponema denticola (strain ATCC 35405 / DSM 14222 / CIP 103919 / JCM 8153 / KCTC 15104).